A 224-amino-acid chain; its full sequence is UPF0758 protein PSPPH_0210 (224 aa).

Residues 102-224 (ALENPTQVRN…PLSMVERGLM (123 aa)) enclose the MPN domain. Histidine 173, histidine 175, and aspartate 186 together coordinate Zn(2+). The JAMM motif motif lies at 173-186 (HNHPSGITTPSRSD).

This sequence belongs to the UPF0758 family.

This Pseudomonas savastanoi pv. phaseolicola (strain 1448A / Race 6) (Pseudomonas syringae pv. phaseolicola (strain 1448A / Race 6)) protein is UPF0758 protein PSPPH_0210.